The following is a 177-amino-acid chain: TRAF-interacting protein with FHA domain-containing protein A (177 aa).

The 57-residue stretch at 48 to 104 (VAFGRDYNVCRYPLLSNRVSRIQFNLQFFKHFNCSTTAIEIKNLSKKNKLYVDNLEL) folds into the FHA domain.

This sequence belongs to the TIFA family. As to quaternary structure, interacts with traf6.

It localises to the cytoplasm. In terms of biological role, adapter molecule that plays a key role in the activation of pro-inflammatory NF-kappa-B signaling following detection of bacterial pathogen-associated molecular pattern metabolites (PAMPs). Promotes activation of an innate immune response by inducing the oligomerization and polyubiquitination of TRAF6, which leads to the activation of TAK1 and IKK through a proteasome-independent mechanism. The polypeptide is TRAF-interacting protein with FHA domain-containing protein A (Xenopus tropicalis (Western clawed frog)).